The primary structure comprises 785 residues: Endonuclease MutS2 (785 aa).

334–341 (GPNTGGKT) lines the ATP pocket. The region spanning 710–785 (LDLRGKRYEE…GNGATIVHFK (76 aa)) is the Smr domain.

Belongs to the DNA mismatch repair MutS family. MutS2 subfamily. In terms of assembly, homodimer. Binds to stalled ribosomes, contacting rRNA.

Functionally, endonuclease that is involved in the suppression of homologous recombination and thus may have a key role in the control of bacterial genetic diversity. In terms of biological role, acts as a ribosome collision sensor, splitting the ribosome into its 2 subunits. Detects stalled/collided 70S ribosomes which it binds and splits by an ATP-hydrolysis driven conformational change. Acts upstream of the ribosome quality control system (RQC), a ribosome-associated complex that mediates the extraction of incompletely synthesized nascent chains from stalled ribosomes and their subsequent degradation. Probably generates substrates for RQC. The chain is Endonuclease MutS2 from Pediococcus pentosaceus (strain ATCC 25745 / CCUG 21536 / LMG 10740 / 183-1w).